The primary structure comprises 100 residues: Probable steroid-binding protein 3 (100 aa).

Met-1 bears the N-acetylmethionine mark. Residues Met-1–Asn-82 enclose the Cytochrome b5 heme-binding domain. The sterol-binding stretch occupies residues Met-1–Asn-82.

The protein belongs to the cytochrome b5 family. MAPR subfamily.

The protein localises to the nucleus. This chain is Probable steroid-binding protein 3 (MP3), found in Arabidopsis thaliana (Mouse-ear cress).